The following is a 392-amino-acid chain: Methylthioribose-1-phosphate isomerase (392 aa).

Aspartate 267 functions as the Proton donor in the catalytic mechanism.

This sequence belongs to the eIF-2B alpha/beta/delta subunits family. MtnA subfamily.

Its subcellular location is the cytoplasm. It is found in the nucleus. It catalyses the reaction 5-(methylsulfanyl)-alpha-D-ribose 1-phosphate = 5-(methylsulfanyl)-D-ribulose 1-phosphate. The protein operates within amino-acid biosynthesis; L-methionine biosynthesis via salvage pathway; L-methionine from S-methyl-5-thio-alpha-D-ribose 1-phosphate: step 1/6. Functionally, catalyzes the interconversion of methylthioribose-1-phosphate (MTR-1-P) into methylthioribulose-1-phosphate (MTRu-1-P). This Blastomyces gilchristii (strain SLH14081) (Blastomyces dermatitidis) protein is Methylthioribose-1-phosphate isomerase.